The sequence spans 551 residues: Podocalyxin (551 aa).

The signal sequence occupies residues 1–21 (MRSALALAALLLLLLSPPSLS). Positions 18-324 (PSLSQEKSPQ…QRVSCGPPER (307 aa)) are disordered. At 22–452 (QEKSPQPGPT…PPEETEDRFS (431 aa)) the chain is on the extracellular side. A compositionally biased stretch (low complexity) spans 32–59 (PMATSTSTRPAPASAPAPKSSVAASVPA). Polar residues predominate over residues 60 to 90 (EQNTTPMTTKAPATQSPSASPGSSVENSAPA). Low complexity predominate over residues 91 to 104 (QGSTTTQQSLSVTT). Residues 142–164 (APSNHSITTKPLATEATSQAPRQ) show a composition bias toward polar residues. N-linked (GlcNAc...) asparagine glycosylation is found at Asn145 and Asn180. Polar residues predominate over residues 234 to 244 (PVASSAETQGM). Over residues 289 to 300 (TSSSTELASTAL) the composition is skewed to low complexity. Asn333 carries N-linked (GlcNAc...) asparagine glycosylation. A helical membrane pass occupies residues 453–473 (LPLIITIVCMASFLLLVAALY). Over 474–551 (GCCHQRLSHR…DLDEEEDTHL (78 aa)) the chain is Cytoplasmic. Thr511 carries the post-translational modification Phosphothreonine. Ser530 is modified (phosphoserine). Thr549 carries the phosphothreonine modification.

It belongs to the podocalyxin family. As to quaternary structure, monomer; when associated with the membrane raft. Oligomer; when integrated in the apical membrane. Found in a complex with EZR, PODXL and NHERF2. Associates with the actin cytoskeleton through complex formation with EZR and NHERF2. Interacts (via the C-terminal PDZ-binding motif DTHL) with NHERF1 (via the PDZ domains); interaction is not detected in glomerular epithelium cells, take place early in the secretory pathway and is necessary for its apical membrane sorting. Interacts (via the C-terminal PDZ-binding motif DTHL) with NHERF2 (via the PDZ 1 domain); interaction is detected in glomerular epithelium cells. Interacts with EZR. In terms of processing, N- and O-linked glycosylated. Sialoglycoprotein. Glomerular epithelium cell (podocyte) and endothelial cells.

It is found in the apical cell membrane. It localises to the cell projection. The protein localises to the microvillus. The protein resides in the membrane raft. Its subcellular location is the lamellipodium. It is found in the filopodium. It localises to the ruffle. The protein localises to the membrane. Its function is as follows. Involved in the regulation of both adhesion and cell morphology and cancer progression. Functions as an anti-adhesive molecule that maintains an open filtration pathway between neighboring foot processes in the podocyte by charge repulsion. Acts as a pro-adhesive molecule, enhancing the adherence of cells to immobilized ligands, increasing the rate of migration and cell-cell contacts in an integrin-dependent manner. Induces the formation of apical actin-dependent microvilli. Involved in the formation of a preapical plasma membrane subdomain to set up initial epithelial polarization and the apical lumen formation during renal tubulogenesis. Plays a role in cancer development and aggressiveness by inducing cell migration and invasion through its interaction with the actin-binding protein EZR. Affects EZR-dependent signaling events, leading to increased activities of the MAPK and PI3K pathways in cancer cells. In Oryctolagus cuniculus (Rabbit), this protein is Podocalyxin (PODXL).